The primary structure comprises 401 residues: Nicotinate phosphoribosyltransferase (401 aa).

Position 224 is a phosphohistidine; by autocatalysis (H224).

It belongs to the NAPRTase family. Post-translationally, transiently phosphorylated on a His residue during the reaction cycle. Phosphorylation strongly increases the affinity for substrates and increases the rate of nicotinate D-ribonucleotide production. Dephosphorylation regenerates the low-affinity form of the enzyme, leading to product release.

It carries out the reaction nicotinate + 5-phospho-alpha-D-ribose 1-diphosphate + ATP + H2O = nicotinate beta-D-ribonucleotide + ADP + phosphate + diphosphate. It participates in cofactor biosynthesis; NAD(+) biosynthesis; nicotinate D-ribonucleotide from nicotinate: step 1/1. In terms of biological role, catalyzes the synthesis of beta-nicotinate D-ribonucleotide from nicotinate and 5-phospho-D-ribose 1-phosphate at the expense of ATP. This chain is Nicotinate phosphoribosyltransferase, found in Pseudomonas putida (strain GB-1).